Consider the following 89-residue polypeptide: Small membrane A-kinase anchor protein (89 aa).

The interval Met-1–Gly-29 is disordered. A lipid anchor (N-myristoyl glycine) is attached at Gly-2. The span at Ser-17 to Gly-29 shows a compositional bias: basic and acidic residues.

It belongs to the small membrane AKAP family. Post-translationally, may be palmitoylated at Cys-3.

It is found in the cell membrane. Binds to type I regulatory subunits of protein kinase A and may anchor/target them to the plasma membrane. The polypeptide is Small membrane A-kinase anchor protein (Danio rerio (Zebrafish)).